The chain runs to 384 residues: Soluble hydrogenase, small subunit (384 aa).

Lys194 is modified (N6-(pyridoxal phosphate)lysine).

It belongs to the class-V pyridoxal-phosphate-dependent aminotransferase family. In terms of assembly, heterodimer of a large and a small subunit. Pyridoxal 5'-phosphate is required as a cofactor.

It localises to the cytoplasm. Soluble hydrogenase catalyzes both production and consumption of hydrogen from suitable artificial electron donors or acceptors. This subunit catalyzes the tritium-exchange activity. The chain is Soluble hydrogenase, small subunit from Synechococcus sp. (strain PCC 6716).